We begin with the raw amino-acid sequence, 393 residues long: Potassium channel subfamily K member 4 (393 aa).

At 1 to 3 (MRS) the chain is on the cytoplasmic side. Residues 4–24 (TTLLALLALVLLYLVSGALVF) form a helical membrane-spanning segment. The Extracellular portion of the chain corresponds to 25–87 (RALEQPHEQQ…NSTSNSSHSA (63 aa)). 2 N-linked (GlcNAc...) asparagine glycosylation sites follow: Asn-78 and Asn-82. Positions 88-102 (WDLGSAFFFSGTIIT) form an intramembrane region, helical. The K(+) site is built by Thr-103, Ile-104, Gly-105, and Tyr-106. Residues 103-108 (TIGYGN) are selectivity filter 1. Residues 103–109 (TIGYGNV) lie within the membrane without spanning it. The Extracellular portion of the chain corresponds to 110–117 (ALRTDAGR). A helical transmembrane segment spans residues 118–150 (LFCIFYALVGIPLFGILLAGVGDRLGSSLRHGI). Over 151–172 (GHIEAIFLKWHVPPELVRVLSA) the chain is Cytoplasmic. A helical membrane pass occupies residues 173-194 (MLFLLIGCLLFVLTPTFVFCYM). Residues 195–199 (EDWSK) lie on the Extracellular side of the membrane. Positions 200–213 (LEAIYFVIVTLTTV) form an intramembrane region, helical. K(+)-binding residues include Thr-212, Val-213, Gly-214, and Phe-215. The interval 212–217 (TVGFGD) is selectivity filter 2. An intramembrane segment occupies 214–219 (GFGDYV). The Extracellular segment spans residues 220 to 233 (AGADPRQDSPAYQP). Residues 234–260 (LVWFWILLGLAYFASVLTTIGNWLRVV) traverse the membrane as a helical segment. Residues 261–393 (SRRTRAEMGG…GRPRDKGVPV (133 aa)) lie on the Cytoplasmic side of the membrane. Residues 285 to 393 (RVTQRAGPAA…GRPRDKGVPV (109 aa)) form a disordered region. Residues 319-332 (SPSPPEKAQPPSPP) are compositionally biased toward pro residues. Over residues 365-384 (PRGRRRPNPPRKPVRPRGPG) the composition is skewed to basic residues.

Belongs to the two pore domain potassium channel (TC 1.A.1.8) family. In terms of assembly, homodimer; disulfide-linked. Forms heterodimers with other 2-pore domain K(+) channel subunits, such as KCNK2 and KCNK10. In terms of processing, N-glycosylated.

Its subcellular location is the cell membrane. The protein resides in the cell projection. The protein localises to the axon. The enzyme catalyses K(+)(in) = K(+)(out). It catalyses the reaction Rb(+)(in) = Rb(+)(out). It carries out the reaction Cs(+)(in) = Cs(+)(out). Activated by mechanical stretch and arachidonic acid. In terms of biological role, k(+) channel that conducts voltage-dependent outward rectifying currents upon membrane depolarization. Voltage sensing is coupled to K(+) electrochemical gradient in an 'ion flux gating' mode where outward but not inward ion flow opens the gate. Converts to voltage-independent 'leak' conductance mode upon stimulation by various stimuli including mechanical membrane stretch, basic pH, heat and lipids. Homo- and heterodimerizes to form functional channels with distinct regulatory and gating properties. At trigeminal A-beta afferent nerves, the heterodimer of KCNK2/TREK-1 and KCNK4/TRAAK is mostly coexpressed at nodes of Ranvier where it conducts voltage-independent mechanosensitive and thermosensitive currents, allowing rapid action potential repolarization, high speed and high frequence saltatory conduction on myelinated nerves to ensure prompt sensory responses. Permeable to other monovalent cations such as Rb(+) and Cs(+). This is Potassium channel subfamily K member 4 from Homo sapiens (Human).